The following is a 364-amino-acid chain: Protein leg1a (364 aa).

The first 22 residues, 1-22 (MSEMGFLRSVAAVLLLAVFSHA), serve as a signal peptide directing secretion. Asn-70 is a glycosylation site (N-linked (GlcNAc...) asparagine).

The protein belongs to the LEG1 family. Detected in all tissues tested, with the highest levels in serum (at protein level). At mRNA level, only expressed in liver.

The protein localises to the secreted. Functionally, important for early development of liver, exocrine pancreas and intestine, probably through cell cycle regulation. In liver, its function is partially redundant with leg1b function. The sequence is that of Protein leg1a from Danio rerio (Zebrafish).